Here is a 274-residue protein sequence, read N- to C-terminus: MNHQNLLSITRNLVHPPISSGLVLLSARELDKMRRVGQLAANLLNHLESMVQPGVSTQALNDEATRWMEDHGAISATLGYAPPGYPPFTGAICTSINEVVCHGIPNPKQILKDGDIINIDVTLRLAGYHGDTSRTFLVGSVSATARKLVEATQESMMRGIAEIKPGARIGDIGAAIQAYAEASGFSVVRDMVGHGIGRQMHTELQIPHYGKRGSGLKLRPGMVFTVEPMLNEGTYELTFLADGWTVITKDKKLSAQFEHTVVVTEEGVEILTLA.

H102 provides a ligand contact to substrate. Residues D120, D131, and H194 each contribute to the a divalent metal cation site. Residue H201 participates in substrate binding. 2 residues coordinate a divalent metal cation: E227 and E258.

This sequence belongs to the peptidase M24A family. Methionine aminopeptidase type 1 subfamily. As to quaternary structure, monomer. Co(2+) serves as cofactor. Requires Zn(2+) as cofactor. Mn(2+) is required as a cofactor. The cofactor is Fe(2+).

The catalysed reaction is Release of N-terminal amino acids, preferentially methionine, from peptides and arylamides.. Removes the N-terminal methionine from nascent proteins. The N-terminal methionine is often cleaved when the second residue in the primary sequence is small and uncharged (Met-Ala-, Cys, Gly, Pro, Ser, Thr, or Val). Requires deformylation of the N(alpha)-formylated initiator methionine before it can be hydrolyzed. This chain is Methionine aminopeptidase B, found in Synechocystis sp. (strain ATCC 27184 / PCC 6803 / Kazusa).